The following is a 566-amino-acid chain: Oxygen-dependent choline dehydrogenase (566 aa).

7–36 (DYIICGAGSAGNVLATRLTEDPNVTVLLLE) provides a ligand contact to FAD. Residues 185–204 (EGFGPMDRTVTPKGRRASTA) form a disordered region. Histidine 474 acts as the Proton acceptor in catalysis.

This sequence belongs to the GMC oxidoreductase family. It depends on FAD as a cofactor.

It carries out the reaction choline + A = betaine aldehyde + AH2. The catalysed reaction is betaine aldehyde + NAD(+) + H2O = glycine betaine + NADH + 2 H(+). The protein operates within amine and polyamine biosynthesis; betaine biosynthesis via choline pathway; betaine aldehyde from choline (cytochrome c reductase route): step 1/1. Functionally, involved in the biosynthesis of the osmoprotectant glycine betaine. Catalyzes the oxidation of choline to betaine aldehyde and betaine aldehyde to glycine betaine at the same rate. This chain is Oxygen-dependent choline dehydrogenase, found in Burkholderia vietnamiensis (strain G4 / LMG 22486) (Burkholderia cepacia (strain R1808)).